Reading from the N-terminus, the 318-residue chain is Ankyrin repeat domain-containing protein 1 (318 aa).

Residues 37-77 (ALEKQEDLKTTSKSLIELEEEKQSKEKQLKSELLKKKLEER) adopt a coiled-coil conformation. ANK repeat units lie at residues 151-180 (YKRT…NIEF), 184-213 (LEST…AINA), 217-246 (LLST…DLNA), 250-279 (EGDT…NLNI), and 283-314 (AGKT…KNSH).

The protein resides in the nucleus. Functionally, may act as a nuclear transcription factor that negatively regulates the expression of cardiac genes. In Xenopus laevis (African clawed frog), this protein is Ankyrin repeat domain-containing protein 1 (ankrd1).